A 79-amino-acid polypeptide reads, in one-letter code: Small ribosomal subunit protein bS18 (79 aa).

This sequence belongs to the bacterial ribosomal protein bS18 family. In terms of assembly, part of the 30S ribosomal subunit. Forms a tight heterodimer with protein bS6.

Binds as a heterodimer with protein bS6 to the central domain of the 16S rRNA, where it helps stabilize the platform of the 30S subunit. The polypeptide is Small ribosomal subunit protein bS18 (Latilactobacillus sakei subsp. sakei (strain 23K) (Lactobacillus sakei subsp. sakei)).